The sequence spans 182 residues: Transmembrane protein 11 homolog, mitochondrial (182 aa).

S25 carries the phosphoserine modification. Transmembrane regions (helical) follow at residues 70 to 89 (TAVA…RDRP) and 91 to 108 (IAAP…LYTV).

It belongs to the TMEM11 family.

It localises to the mitochondrion inner membrane. Plays a role in mitochondrial morphogenesis. The polypeptide is Transmembrane protein 11 homolog, mitochondrial (Pmi) (Drosophila melanogaster (Fruit fly)).